A 512-amino-acid polypeptide reads, in one-letter code: Protein maelstrom homolog (512 aa).

Positions 9–75 (AKGPFYFFMM…NPKEAGGYGE (67 aa)) form a DNA-binding region, HMG box. 3 disordered regions span residues 49–72 (APHE…EAGG), 360–421 (RMSK…GTRA), and 439–465 (QSAN…DPQS). The segment covering 360-370 (RMSKLTTTSDN) has biased composition (polar residues). Basic and acidic residues predominate over residues 379-388 (RSTDRTDRDV). 2 stretches are compositionally biased toward polar residues: residues 393–421 (IYSS…GTRA) and 439–449 (QSANRSPTKKN). Residues 451–464 (WSRENKLTEVRDPQ) are compositionally biased toward basic and acidic residues.

Belongs to the maelstrom family.

Its subcellular location is the cytoplasm. It localises to the nucleus. Functionally, plays a central role during gametogenesis by repressing transposable elements and preventing their mobilization, which is essential for the germline integrity. Probably acts via the piRNA metabolic process, which mediates the repression of transposable elements during meiosis by forming complexes composed of piRNAs and Piwi proteins and governs the repression of transposons. The sequence is that of Protein maelstrom homolog (mael) from Culex quinquefasciatus (Southern house mosquito).